Here is a 236-residue protein sequence, read N- to C-terminus: Urease accessory protein UreG (236 aa).

The disordered stretch occupies residues 1 to 26 (MHDHSLHSGHDHGLGPGSFHDRGAPH). 42–49 (GPVGSGKT) lines the GTP pocket.

It belongs to the SIMIBI class G3E GTPase family. UreG subfamily. In terms of assembly, homodimer. UreD, UreF and UreG form a complex that acts as a GTP-hydrolysis-dependent molecular chaperone, activating the urease apoprotein by helping to assemble the nickel containing metallocenter of UreC. The UreE protein probably delivers the nickel.

Its subcellular location is the cytoplasm. Functionally, facilitates the functional incorporation of the urease nickel metallocenter. This process requires GTP hydrolysis, probably effectuated by UreG. This chain is Urease accessory protein UreG, found in Anaeromyxobacter sp. (strain Fw109-5).